A 321-amino-acid polypeptide reads, in one-letter code: 2,3,4,5-tetrahydropyridine-2,6-dicarboxylate N-succinyltransferase (321 aa).

Asp-166 and Glu-183 together coordinate Mg(2+). Residue Glu-199 is the Acyl-anhydride intermediate of the active site. Succinyl-CoA-binding positions include Arg-201, Gly-216, Ser-219, Ala-242, 257–258 (EA), Gly-265, Lys-281, and 294–297 (RRNS).

This sequence belongs to the type 2 tetrahydrodipicolinate N-succinyltransferase family. Homotrimer.

The protein localises to the cytoplasm. It catalyses the reaction (S)-2,3,4,5-tetrahydrodipicolinate + succinyl-CoA + H2O = (S)-2-succinylamino-6-oxoheptanedioate + CoA. It functions in the pathway amino-acid biosynthesis; L-lysine biosynthesis via DAP pathway; LL-2,6-diaminopimelate from (S)-tetrahydrodipicolinate (succinylase route): step 1/3. In terms of biological role, catalyzes the conversion of the cyclic tetrahydrodipicolinate (THDP) into the acyclic N-succinyl-L-2-amino-6-oxopimelate using succinyl-CoA. The polypeptide is 2,3,4,5-tetrahydropyridine-2,6-dicarboxylate N-succinyltransferase (Rothia mucilaginosa (strain DY-18) (Stomatococcus mucilaginosus)).